The sequence spans 140 residues: Putative pre-16S rRNA nuclease (140 aa).

It belongs to the YqgF nuclease family.

It localises to the cytoplasm. In terms of biological role, could be a nuclease involved in processing of the 5'-end of pre-16S rRNA. This is Putative pre-16S rRNA nuclease from Pasteurella multocida (strain Pm70).